The primary structure comprises 174 residues: uncharacterized protein (174 aa).

The interval 138–174 (VNLTSKSSGRSDEEGTTRRAPVLKTRADFVSRKDKHR) is disordered. Basic and acidic residues predominate over residues 162-174 (TRADFVSRKDKHR).

This is an uncharacterized protein from Bos taurus (Bovine).